The following is a 431-amino-acid chain: Glutamate-1-semialdehyde 2,1-aminomutase (431 aa).

Position 269 is an N6-(pyridoxal phosphate)lysine (Lys269).

It belongs to the class-III pyridoxal-phosphate-dependent aminotransferase family. HemL subfamily. As to quaternary structure, homodimer. Pyridoxal 5'-phosphate is required as a cofactor.

Its subcellular location is the cytoplasm. It carries out the reaction (S)-4-amino-5-oxopentanoate = 5-aminolevulinate. It participates in porphyrin-containing compound metabolism; protoporphyrin-IX biosynthesis; 5-aminolevulinate from L-glutamyl-tRNA(Glu): step 2/2. The sequence is that of Glutamate-1-semialdehyde 2,1-aminomutase from Francisella tularensis subsp. holarctica (strain LVS).